A 345-amino-acid polypeptide reads, in one-letter code: Phosphoribosylformylglycinamidine cyclo-ligase (345 aa).

Belongs to the AIR synthase family.

It is found in the cytoplasm. It carries out the reaction 2-formamido-N(1)-(5-O-phospho-beta-D-ribosyl)acetamidine + ATP = 5-amino-1-(5-phospho-beta-D-ribosyl)imidazole + ADP + phosphate + H(+). The protein operates within purine metabolism; IMP biosynthesis via de novo pathway; 5-amino-1-(5-phospho-D-ribosyl)imidazole from N(2)-formyl-N(1)-(5-phospho-D-ribosyl)glycinamide: step 2/2. The protein is Phosphoribosylformylglycinamidine cyclo-ligase of Anaeromyxobacter sp. (strain K).